The primary structure comprises 610 residues: Methionine--tRNA ligase (610 aa).

The short motif at 12 to 22 (PYANGPRHIGH) is the 'HIGH' region element. Positions 144, 147, 157, and 160 each coordinate Zn(2+). A 'KMSKS' region motif is present at residues 348 to 352 (KFSSS). ATP is bound at residue Ser351.

This sequence belongs to the class-I aminoacyl-tRNA synthetase family. MetG type 1 subfamily. In terms of assembly, monomer. Zn(2+) is required as a cofactor.

The protein localises to the cytoplasm. It carries out the reaction tRNA(Met) + L-methionine + ATP = L-methionyl-tRNA(Met) + AMP + diphosphate. Its function is as follows. Is required not only for elongation of protein synthesis but also for the initiation of all mRNA translation through initiator tRNA(fMet) aminoacylation. This is Methionine--tRNA ligase from Corynebacterium diphtheriae (strain ATCC 700971 / NCTC 13129 / Biotype gravis).